A 369-amino-acid chain; its full sequence is Coiled-coil domain-containing protein 130 homolog (369 aa).

The span at 233 to 263 shows a compositional bias: basic and acidic residues; sequence TRYRDTKTHDDHLESSRDRIESRRIFRRPEE. Residues 233–369 form a disordered region; the sequence is TRYRDTKTHD…EYGNSSDDSD (137 aa). Over residues 266-282 the composition is skewed to low complexity; sequence TPSTSSGSSGGAVPSAS. Over residues 283–297 the composition is skewed to basic and acidic residues; the sequence is ERLKATMKAERDKRI. Over residues 299–310 the composition is skewed to low complexity; it reads ASFSTAGTSSAT.

It belongs to the CWC16 family.

This Caenorhabditis elegans protein is Coiled-coil domain-containing protein 130 homolog.